The primary structure comprises 70 residues: MILYPSIVDLMEKVDSKYTLCSLVAKRARQLIAGDTKLVDIDSDKPVTIATEEVNNGLITYQRPQKYGIK.

This sequence belongs to the RNA polymerase subunit omega family. The RNAP catalytic core consists of 2 alpha, 1 beta, 1 beta' and 1 omega subunit. When a sigma factor is associated with the core the holoenzyme is formed, which can initiate transcription.

It catalyses the reaction RNA(n) + a ribonucleoside 5'-triphosphate = RNA(n+1) + diphosphate. Functionally, promotes RNA polymerase assembly. Latches the N- and C-terminal regions of the beta' subunit thereby facilitating its interaction with the beta and alpha subunits. The protein is DNA-directed RNA polymerase subunit omega of Thermoanaerobacter sp. (strain X514).